Here is a 208-residue protein sequence, read N- to C-terminus: Glycerol-3-phosphate acyltransferase (208 aa).

Transmembrane regions (helical) follow at residues 3 to 23 (ILLA…VVVS), 51 to 71 (KAAI…VWLA), 78 to 98 (DVAI…PVFF), 115 to 135 (AVHP…AFFF), and 140 to 160 (LAAL…FGMP).

The protein belongs to the PlsY family. As to quaternary structure, probably interacts with PlsX.

It localises to the cell inner membrane. It carries out the reaction an acyl phosphate + sn-glycerol 3-phosphate = a 1-acyl-sn-glycero-3-phosphate + phosphate. Its pathway is lipid metabolism; phospholipid metabolism. Functionally, catalyzes the transfer of an acyl group from acyl-phosphate (acyl-PO(4)) to glycerol-3-phosphate (G3P) to form lysophosphatidic acid (LPA). This enzyme utilizes acyl-phosphate as fatty acyl donor, but not acyl-CoA or acyl-ACP. The protein is Glycerol-3-phosphate acyltransferase of Burkholderia orbicola (strain MC0-3).